Here is a 308-residue protein sequence, read N- to C-terminus: MTNLQELPSRGHLLTEQINPASQNLDQLTPLELVDLFNQEDAHTLRAIAQAREALAQTISATAARLRQGGRLFYIGAGTSGRLGVLDAAECPPTFCTPPHLVQGILAGGDAALVRSSEGLEDRYEDGAAVVGDRQITAQDVVIGISAGGTTPYVHGALDAAQGVGALTVFMACVPVEQVQRSADIDIRLLVGPELLAGSTRLKAGTATKMALNIISTGVMVQLGKVYGNRMVDVAVSNRKLLDRALRILTDVTGMDRAAAAALLERSGYQVKRALLMHWTGLDAPAAQALLDQQNGQLHAARSAALDP.

The 164-residue stretch at 62-225 (TAARLRQGGR…STGVMVQLGK (164 aa)) folds into the SIS domain. Glu-90 acts as the Proton donor in catalysis. The active site involves Glu-121.

This sequence belongs to the GCKR-like family. MurNAc-6-P etherase subfamily. Homodimer.

It catalyses the reaction N-acetyl-D-muramate 6-phosphate + H2O = N-acetyl-D-glucosamine 6-phosphate + (R)-lactate. It functions in the pathway amino-sugar metabolism; N-acetylmuramate degradation. Its function is as follows. Specifically catalyzes the cleavage of the D-lactyl ether substituent of MurNAc 6-phosphate, producing GlcNAc 6-phosphate and D-lactate. The protein is N-acetylmuramic acid 6-phosphate etherase of Thermosynechococcus vestitus (strain NIES-2133 / IAM M-273 / BP-1).